The primary structure comprises 522 residues: Sensory neuron membrane protein 1 (522 aa).

At 1–11 (MQLAKPLKYAA) the chain is on the cytoplasmic side. The chain crosses the membrane as a helical span at residues 12–32 (ISGIVAFVGLMFGWVIFPAIL). The Extracellular segment spans residues 33 to 458 (KSQLKKEMAL…SQLFIPKRVV (426 aa)). Residues asparagine 67, asparagine 105, and asparagine 229 are each glycosylated (N-linked (GlcNAc...) asparagine). Disulfide bonds link cysteine 268-cysteine 333, cysteine 297-cysteine 352, and cysteine 335-cysteine 341. N-linked (GlcNAc...) asparagine glycosylation occurs at asparagine 440. A helical transmembrane segment spans residues 459–479 (SVVCWCMISFGSLGVIAAVIF). Residues 480-522 (HFKGDIMHLAVAGDNSVSKIKPENDENKEVGVMGQNQEPAKVM) are Cytoplasmic-facing. Residues 500–522 (KPENDENKEVGVMGQNQEPAKVM) form a disordered region. Residues 513–522 (GQNQEPAKVM) are compositionally biased toward polar residues.

Belongs to the CD36 family. In terms of tissue distribution, principal component of the olfactory cilia membrane. Detected in both male and female antennae but not present in leg, abdomen, thorax or head.

The protein localises to the cell membrane. In terms of biological role, plays an olfactory role that is not restricted to pheromone sensitivity. The protein is Sensory neuron membrane protein 1 of Bombyx mori (Silk moth).